Here is a 323-residue protein sequence, read N- to C-terminus: tRNA U34 carboxymethyltransferase (323 aa).

Carboxy-S-adenosyl-L-methionine is bound by residues Lys-91, Trp-105, Lys-110, Gly-130, 152–154 (DPT), 181–182 (IE), Met-196, Tyr-200, and Arg-315.

This sequence belongs to the class I-like SAM-binding methyltransferase superfamily. CmoB family. In terms of assembly, homotetramer.

It catalyses the reaction carboxy-S-adenosyl-L-methionine + 5-hydroxyuridine(34) in tRNA = 5-carboxymethoxyuridine(34) in tRNA + S-adenosyl-L-homocysteine + H(+). Functionally, catalyzes carboxymethyl transfer from carboxy-S-adenosyl-L-methionine (Cx-SAM) to 5-hydroxyuridine (ho5U) to form 5-carboxymethoxyuridine (cmo5U) at position 34 in tRNAs. In Salmonella arizonae (strain ATCC BAA-731 / CDC346-86 / RSK2980), this protein is tRNA U34 carboxymethyltransferase.